The following is a 1401-amino-acid chain: DNA-directed RNA polymerase subunit beta' (1401 aa).

Cysteine 70, cysteine 72, cysteine 85, and cysteine 88 together coordinate Zn(2+). Residues aspartate 460, aspartate 462, and aspartate 464 each coordinate Mg(2+). 4 residues coordinate Zn(2+): cysteine 808, cysteine 882, cysteine 889, and cysteine 892.

It belongs to the RNA polymerase beta' chain family. The RNAP catalytic core consists of 2 alpha, 1 beta, 1 beta' and 1 omega subunit. When a sigma factor is associated with the core the holoenzyme is formed, which can initiate transcription. The cofactor is Mg(2+). Zn(2+) is required as a cofactor.

The catalysed reaction is RNA(n) + a ribonucleoside 5'-triphosphate = RNA(n+1) + diphosphate. Its function is as follows. DNA-dependent RNA polymerase catalyzes the transcription of DNA into RNA using the four ribonucleoside triphosphates as substrates. The chain is DNA-directed RNA polymerase subunit beta' from Legionella pneumophila (strain Paris).